The chain runs to 423 residues: tRNA(Ile)-lysidine synthase (423 aa).

An ATP-binding site is contributed by 27–32 (SGGVDS).

The protein belongs to the tRNA(Ile)-lysidine synthase family.

The protein localises to the cytoplasm. The catalysed reaction is cytidine(34) in tRNA(Ile2) + L-lysine + ATP = lysidine(34) in tRNA(Ile2) + AMP + diphosphate + H(+). Its function is as follows. Ligates lysine onto the cytidine present at position 34 of the AUA codon-specific tRNA(Ile) that contains the anticodon CAU, in an ATP-dependent manner. Cytidine is converted to lysidine, thus changing the amino acid specificity of the tRNA from methionine to isoleucine. The protein is tRNA(Ile)-lysidine synthase of Streptococcus mutans serotype c (strain ATCC 700610 / UA159).